The following is a 932-amino-acid chain: MTEFLPFVARHIGPRHEDERAMLAALGLPSMETLITQAVPASIRLNRALNLPAALSEADALAELGTIMGRNVVKKSFIGAGYHGVHTPPVIQRNLFENPAWYTAYTPYQSEISQGRLELLFHFQTLVAELTGLPVACASLLDEATAVAEAIGVACRHHRDKRSRILLAGELHPQTVDVVNTRAEPLGWEIATGSDVDDNTAAIVVPWPDTRGVYGDFAKVIADAKAKGALVIAVADPLALTIMEAPARWGADMAVGSMQRYGVPMGFGGPHAAYLAVSEALTRIIPGRIVGQSVDAHGRAAYRLALQTREQHIRRDKATSNICTAQALLANMAAAFAIWHGPAGLQAIATRVAALAARFAAALKAAGVEIAGESLFDTVTAKVPGKAAAIAAEADKGGRLIRIIDADTVGVTFDETSTEEDLTALASLFGAKPVGGDTVLVPGKERGEGFLTQEVFHSHRSETEMMRFLRRLADKDLALDRAMIPLGSCTMKLNAAAEMMPVSWNTVANLHPFAPAEQVQGYAKMTSDLEAWLCEITGFAGVSLQPNAGSQGEYAGLMAIRHYHQAWGQGHRNICLIPSSAHGTNPASASMAGMSVVVVNCRPDGDIDIDDLKAKAEKHRDNLAAFMITYPSTYGVFEEGIKAFCEIVHDNGGQVYFDGANLNALVGLARPADIGADVCHMNLHKTFCIPHGGGGPGVGPIGVAKHLVPYLPGHVEAGSEHAVAAAQFGSASILVITWMYIRMMGGAGLKKATEAAILNANYIAHRLKGVYPILYTGAHDRVAHECIVDTRVLKDSAGITVEDVAKRLIDYGFHAPTMSWPVAGTLMIEPTESEPKLEIDRLCDAMIAIAGEAKKVADGVWPADDNPLANAPHTASDTLATEWKHPYTREEAVFPGGAFDPTAKYWPPVSRVDNVGGDRNLICSCPPVAAYG.

Lys685 bears the N6-(pyridoxal phosphate)lysine mark.

Belongs to the GcvP family. As to quaternary structure, the glycine cleavage system is composed of four proteins: P, T, L and H. Pyridoxal 5'-phosphate is required as a cofactor.

The catalysed reaction is N(6)-[(R)-lipoyl]-L-lysyl-[glycine-cleavage complex H protein] + glycine + H(+) = N(6)-[(R)-S(8)-aminomethyldihydrolipoyl]-L-lysyl-[glycine-cleavage complex H protein] + CO2. In terms of biological role, the glycine cleavage system catalyzes the degradation of glycine. The P protein binds the alpha-amino group of glycine through its pyridoxal phosphate cofactor; CO(2) is released and the remaining methylamine moiety is then transferred to the lipoamide cofactor of the H protein. The chain is Glycine dehydrogenase (decarboxylating) from Brucella suis biovar 1 (strain 1330).